An 868-amino-acid polypeptide reads, in one-letter code: Programmed cell death 6-interacting protein (868 aa).

The residue at position 2 (alanine 2) is an N-acetylalanine. The BRO1 domain maps to 3–392 (TFISVQLKKT…AQMREATTLA (390 aa)). Positions 176-503 (TVDISPDTVG…NFRTVLDKAV (328 aa)) are interaction with CHMP4A, CHMP4B and CHMP4C. An interaction with EIAV p9 region spans residues 176 to 868 (TVDISPDTVG…PPQQSYYPQQ (693 aa)). At lysine 215 the chain carries N6-acetyllysine. The tract at residues 418-868 (LTKSRSVIEQ…PPQQSYYPQQ (451 aa)) is interaction with SDCBP. Residue threonine 479 is modified to Phosphothreonine. Residue serine 481 is modified to Phosphoserine. The tract at residues 503–868 (VQADGQVKEC…PPQQSYYPQQ (366 aa)) is self-association. 2 disordered regions span residues 713-809 (IARE…YPGY) and 832-868 (PYPP…YPQQ). The tract at residues 717 to 720 (PSAP) is interaction with TSG101. Serine 730 is subject to Phosphoserine. Residues 737–763 (PTPPTPAPRTMPPTKPQPPARPPPPVL) show a composition bias toward pro residues. 2 positions are modified to phosphothreonine: threonine 738 and threonine 741. At arginine 745 the chain carries Omega-N-methylarginine. Residues 778–791 (GAGTAAPAPSQTPG) are compositionally biased toward low complexity. 2 stretches are compositionally biased toward pro residues: residues 792–807 (SAPP…PTYP) and 844–860 (APYP…PQPP). Residues 801 to 806 (PPYPTY) are interaction with CEP55. The segment at 864–868 (YYPQQ) is essential to promote virus budding.

As to quaternary structure, self-associates. Interacts with SH3KBP1/CIN85. Interacts with PDCD6 in a calcium -dependent manner. Interacts with TSG101 in a calcium-dependent manner; PDCD6IP homooligomerization may be required for TSG101-binding. Interacts with SGSM3. Directly interacts with CHMP4A, CHMP4B and CHMP4C. Directly interacts with CEP55 in a 1:2 stoechiometry. The interaction with CEP55 is required for PDCD6IP targeting to the midbody. May interact with PDGFRB. Interacts with SH3GL1 and SH3GL2/endophilin-1. Forms a complex with SDCBP and SDC2. Found in a complex with F-actin, TJP1/ZO-1 and PARD3. Interacts with CD2AP. Interacts with ARRDC1. Interacts (via BRO1 domain) with the ATG12-ATG3 conjugate; this interaction is bridged by ATG12 and promotes multiple PDCD6IP-mediated functions such as endolysosomal trafficking, macroautophagy and exosome biogenesis. (Microbial infection) Interacts with HIV-1 p6. Interacts with HIV-1 p9. In terms of assembly, (Microbial infection) Interacts with EIAV p9. As to quaternary structure, (Microbial infection) Interacts with Murine leukemia virus Gag polyprotein (via LYPX(n)L motif). (Microbial infection) Interacts with ebola virus protein VP40 (via YPx(n)L/I motif). In terms of processing, may be phosphorylated on tyrosine residues by activated PDGFRB.

It is found in the cytoplasm. The protein localises to the cytosol. It localises to the melanosome. Its subcellular location is the cytoskeleton. The protein resides in the microtubule organizing center. It is found in the centrosome. The protein localises to the secreted. It localises to the extracellular exosome. Its subcellular location is the cell junction. The protein resides in the tight junction. It is found in the midbody. The protein localises to the midbody ring. Multifunctional protein involved in endocytosis, multivesicular body biogenesis, membrane repair, cytokinesis, apoptosis and maintenance of tight junction integrity. Class E VPS protein involved in concentration and sorting of cargo proteins of the multivesicular body (MVB) for incorporation into intralumenal vesicles (ILVs) that are generated by invagination and scission from the limiting membrane of the endosome. Binds to the phospholipid lysobisphosphatidic acid (LBPA) which is abundant in MVBs internal membranes. The MVB pathway requires the sequential function of ESCRT-O, -I,-II and -III complexes. The ESCRT machinery also functions in topologically equivalent membrane fission events, such as the terminal stages of cytokinesis. Adapter for a subset of ESCRT-III proteins, such as CHMP4, to function at distinct membranes. Required for completion of cytokinesis. May play a role in the regulation of both apoptosis and cell proliferation. Regulates exosome biogenesis in concert with SDC1/4 and SDCBP. By interacting with F-actin, PARD3 and TJP1 secures the proper assembly and positioning of actomyosin-tight junction complex at the apical sides of adjacent epithelial cells that defines a spatial membrane domain essential for the maintenance of epithelial cell polarity and barrier. Its function is as follows. (Microbial infection) Involved in HIV-1 virus budding. Can replace TSG101 it its role of supporting HIV-1 release; this function requires the interaction with CHMP4B. The ESCRT machinery also functions in topologically equivalent membrane fission events, such as enveloped virus budding (HIV-1 and other lentiviruses). In Homo sapiens (Human), this protein is Programmed cell death 6-interacting protein.